The chain runs to 171 residues: Shikimate kinase (171 aa).

Position 11-16 (11-16) interacts with ATP; sequence ATGKTT. Residue T15 coordinates Mg(2+). Substrate-binding residues include D33, R57, and G79. Position 117 (R117) interacts with ATP. R136 lines the substrate pocket.

Belongs to the shikimate kinase family. Monomer. It depends on Mg(2+) as a cofactor.

The protein localises to the cytoplasm. It carries out the reaction shikimate + ATP = 3-phosphoshikimate + ADP + H(+). The protein operates within metabolic intermediate biosynthesis; chorismate biosynthesis; chorismate from D-erythrose 4-phosphate and phosphoenolpyruvate: step 5/7. Catalyzes the specific phosphorylation of the 3-hydroxyl group of shikimic acid using ATP as a cosubstrate. This is Shikimate kinase from Thermoanaerobacter pseudethanolicus (strain ATCC 33223 / 39E) (Clostridium thermohydrosulfuricum).